The following is a 344-amino-acid chain: Follistatin (344 aa).

The N-terminal stretch at 1-29 (MARPRHQPGGLCLLLLLLCQFMEDRSAQA) is a signal peptide. A TB domain is found at 30–103 (GNCWLRQAKN…TCENVDCGPG (74 aa)). Cystine bridges form between cysteine 32–cysteine 55, cysteine 42–cysteine 88, cysteine 56–cysteine 91, cysteine 95–cysteine 106, cysteine 100–cysteine 116, cysteine 118–cysteine 150, cysteine 122–cysteine 143, and cysteine 132–cysteine 164. In terms of domain architecture, Follistatin-like 1 spans 94–117 (TCENVDCGPGKKCRMNKKNKPRCV). 3 consecutive Kazal-like domains span residues 112-166 (NKPR…KCKK), 186-241 (NAYC…KCIK), and 261-318 (KVGR…SCNS). An N-linked (GlcNAc...) asparagine glycan is attached at asparagine 124. Residues 167 to 190 (TCRDVFCPGSSTCVVDQTNNAYCV) enclose the Follistatin-like 2 domain. Intrachain disulfides connect cysteine 192–cysteine 225, cysteine 196–cysteine 218, and cysteine 207–cysteine 239. One can recognise a Follistatin-like 3 domain in the interval 244–268 (SCDDIQCTGGKKCLWDFKVGRGRCS). 3 disulfide bridges follow: cysteine 270–cysteine 302, cysteine 274–cysteine 295, and cysteine 284–cysteine 316. An N-linked (GlcNAc...) asparagine glycan is attached at asparagine 288. The segment at 316–344 (CNSISEDTEDEEEDEDQDYSFPISSILEW) is disordered. The span at 321 to 333 (EDTEDEEEDEDQD) shows a compositional bias: acidic residues.

Interacts with GDF11. Interacts with activin A/INHBA. Interacts with myostatin/MSTN.

Its subcellular location is the secreted. It localises to the nucleus. It is found in the nucleolus. In terms of biological role, multifunctional regulatory protein whose primary function is to antagonize members of the transforming growth factor beta (TGF-beta) superfamily including activin, myostatin, GDF11 or bone morphogenetic proteins (BMPs). Mechanistically, binds to these ligands in the extracellular space, blocking their type II receptor-binding site to inhibit downstream signaling. Plays an essential role in muscle fiber formation and growth both by preventing the repressive effects of myostatin and through SMAD3/AKT/mTOR signaling independently of myostatin. Also promotes neural differentiation by antagonizing the action BMP4. Acts as a specific inhibitor of the biosynthesis and secretion of pituitary follicle stimulating hormone (FSH) by sequestering activin A/INHBA. On the other hand, translocates into the nucleus where it down-regulates rRNA synthesis and ribosome biogenesis to maintain cellular energy homeostasis by binding to rDNA. The protein is Follistatin of Bos taurus (Bovine).